A 218-amino-acid polypeptide reads, in one-letter code: Glycerol-3-phosphate acyltransferase (218 aa).

5 consecutive transmembrane segments (helical) span residues Ile-4–Ile-24, Thr-54–Tyr-74, Pro-80–Phe-100, Gly-107–Met-127, and Trp-130–Ile-150.

The protein belongs to the PlsY family. In terms of assembly, probably interacts with PlsX.

The protein localises to the cell inner membrane. The catalysed reaction is an acyl phosphate + sn-glycerol 3-phosphate = a 1-acyl-sn-glycero-3-phosphate + phosphate. The protein operates within lipid metabolism; phospholipid metabolism. In terms of biological role, catalyzes the transfer of an acyl group from acyl-phosphate (acyl-PO(4)) to glycerol-3-phosphate (G3P) to form lysophosphatidic acid (LPA). This enzyme utilizes acyl-phosphate as fatty acyl donor, but not acyl-CoA or acyl-ACP. The protein is Glycerol-3-phosphate acyltransferase of Photorhabdus laumondii subsp. laumondii (strain DSM 15139 / CIP 105565 / TT01) (Photorhabdus luminescens subsp. laumondii).